A 355-amino-acid polypeptide reads, in one-letter code: Putative cyclin-A3-1 (355 aa).

It belongs to the cyclin family. Cyclin AB subfamily.

The polypeptide is Putative cyclin-A3-1 (CYCA3-1) (Arabidopsis thaliana (Mouse-ear cress)).